Here is a 173-residue protein sequence, read N- to C-terminus: Large ribosomal subunit protein uL10 (173 aa).

The protein belongs to the universal ribosomal protein uL10 family. As to quaternary structure, part of the ribosomal stalk of the 50S ribosomal subunit. The N-terminus interacts with L11 and the large rRNA to form the base of the stalk. The C-terminus forms an elongated spine to which L12 dimers bind in a sequential fashion forming a multimeric L10(L12)X complex.

Forms part of the ribosomal stalk, playing a central role in the interaction of the ribosome with GTP-bound translation factors. The polypeptide is Large ribosomal subunit protein uL10 (Chlorobaculum parvum (strain DSM 263 / NCIMB 8327) (Chlorobium vibrioforme subsp. thiosulfatophilum)).